The following is a 128-amino-acid chain: Holin-like protein CidA (128 aa).

4 helical membrane passes run 4–24, 27–46, 59–79, and 88–108; these read LLLT…INWV, ALHI…FTLL, GAAW…VGVI, and FGVS…VSTG.

Belongs to the CidA/LrgA family. CidA subfamily.

It localises to the cell membrane. Its function is as follows. Increases the activity of extracellular murein hydrolases possibly by mediating their export via hole formation. Inhibited by the antiholin-like proteins LrgAB. In an unstressed cell, the LrgAB products probably inhibit the function of the CidA protein. When a cell is stressed by the addition of antibiotics or by other factors in the environment, CidA possibly oligomerizes within the bacterial cell membrane, creating lesions that disrupt the proton motive force, which in turn results in loss of cell viability. These lesions are also hypothesized to regulate the subsequent cell lysis by either allowing the murein hydrolases access to the cell wall substrate and/or regulating their activity by a possible change in the cell wall pH that results from loss of membrane potential. This Bacillus velezensis (strain DSM 23117 / BGSC 10A6 / LMG 26770 / FZB42) (Bacillus amyloliquefaciens subsp. plantarum) protein is Holin-like protein CidA.